Here is a 254-residue protein sequence, read N- to C-terminus: 3-dehydroquinate dehydratase (254 aa).

Residues 47 to 49 (EFR) and R83 contribute to the 3-dehydroquinate site. H144 acts as the Proton donor/acceptor in catalysis. Residue K171 is the Schiff-base intermediate with substrate of the active site. Residues R213, S232, and Q236 each coordinate 3-dehydroquinate.

The protein belongs to the type-I 3-dehydroquinase family. As to quaternary structure, homodimer.

The enzyme catalyses 3-dehydroquinate = 3-dehydroshikimate + H2O. It functions in the pathway metabolic intermediate biosynthesis; chorismate biosynthesis; chorismate from D-erythrose 4-phosphate and phosphoenolpyruvate: step 3/7. In terms of biological role, involved in the third step of the chorismate pathway, which leads to the biosynthesis of aromatic amino acids. Catalyzes the cis-dehydration of 3-dehydroquinate (DHQ) and introduces the first double bond of the aromatic ring to yield 3-dehydroshikimate. This Neisseria meningitidis serogroup B (strain ATCC BAA-335 / MC58) protein is 3-dehydroquinate dehydratase.